Reading from the N-terminus, the 129-residue chain is Small ribosomal subunit protein uS11 (129 aa).

This sequence belongs to the universal ribosomal protein uS11 family. As to quaternary structure, part of the 30S ribosomal subunit. Interacts with proteins S7 and S18. Binds to IF-3.

Located on the platform of the 30S subunit, it bridges several disparate RNA helices of the 16S rRNA. Forms part of the Shine-Dalgarno cleft in the 70S ribosome. This Vibrio campbellii (strain ATCC BAA-1116) protein is Small ribosomal subunit protein uS11.